We begin with the raw amino-acid sequence, 200 residues long: Holliday junction branch migration complex subunit RuvA (200 aa).

The segment at 1–64 (MIGHLRGIIV…EDAHTLYGFH (64 aa)) is domain I. The segment at 65–143 (NDHERRLFRA…RWHTNDTPSP (79 aa)) is domain II. The tract at residues 133–152 (SRWHTNDTPSPEGLRSSNTQ) is disordered. Positions 144 to 148 (EGLRS) are flexible linker. The domain III stretch occupies residues 149–200 (SNTQPTQDAISALMALGYKPQEAKRAIDAIQKPDLSAETLIRLALKQMVLGT).

Belongs to the RuvA family. As to quaternary structure, homotetramer. Forms an RuvA(8)-RuvB(12)-Holliday junction (HJ) complex. HJ DNA is sandwiched between 2 RuvA tetramers; dsDNA enters through RuvA and exits via RuvB. An RuvB hexamer assembles on each DNA strand where it exits the tetramer. Each RuvB hexamer is contacted by two RuvA subunits (via domain III) on 2 adjacent RuvB subunits; this complex drives branch migration. In the full resolvosome a probable DNA-RuvA(4)-RuvB(12)-RuvC(2) complex forms which resolves the HJ.

The protein resides in the cytoplasm. In terms of biological role, the RuvA-RuvB-RuvC complex processes Holliday junction (HJ) DNA during genetic recombination and DNA repair, while the RuvA-RuvB complex plays an important role in the rescue of blocked DNA replication forks via replication fork reversal (RFR). RuvA specifically binds to HJ cruciform DNA, conferring on it an open structure. The RuvB hexamer acts as an ATP-dependent pump, pulling dsDNA into and through the RuvAB complex. HJ branch migration allows RuvC to scan DNA until it finds its consensus sequence, where it cleaves and resolves the cruciform DNA. The polypeptide is Holliday junction branch migration complex subunit RuvA (Coxiella burnetii (strain Dugway 5J108-111)).